The chain runs to 215 residues: Thymidylate kinase (215 aa).

10-17 (GGEGVGKT) lines the ATP pocket.

It belongs to the thymidylate kinase family.

The catalysed reaction is dTMP + ATP = dTDP + ADP. Phosphorylation of dTMP to form dTDP in both de novo and salvage pathways of dTTP synthesis. In Bartonella henselae (strain ATCC 49882 / DSM 28221 / CCUG 30454 / Houston 1) (Rochalimaea henselae), this protein is Thymidylate kinase.